We begin with the raw amino-acid sequence, 167 residues long: Epithelial membrane protein 2 (167 aa).

The helical transmembrane segment at 1–21 threads the bilayer; sequence MLVLLAFIIVFHITSAALLLV. Residues N44, N47, and N52 are each glycosylated (N-linked (GlcNAc...) asparagine). 3 consecutive transmembrane segments (helical) span residues 67-87, 95-115, and 143-163; these read TMIL…LQLF, FVLT…AASI, and FILA…YLIL.

Belongs to the PMP-22/EMP/MP20 family. In terms of assembly, interacts with PTK2; regulates PTK2 activation and localization. Interacts with ITGB3; regulates the levels of the heterodimer ITGA5-ITGB3 integrin surface expression. Interacts with P2RX7 (via C-terminus). Interacts with ITGB1; the interaction may be direct or indirect and ITGB1 has a heterodimer form.

The protein resides in the golgi apparatus membrane. Its subcellular location is the cell membrane. It localises to the apical cell membrane. The protein localises to the membrane raft. It is found in the cytoplasm. The protein resides in the nucleus. Its subcellular location is the perinuclear region. In terms of biological role, functions as a key regulator of cell membrane composition by regulating protein surface expression. Also, plays a role in regulation of processes including cell migration, cell proliferation, cell contraction and cell adhesion. Regulates transepithelial migration of neutrophils into the alveolar lumen, potentially via mediation of cell surface expression of adhesion markers and lipid raft formation. Negatively regulates caveolae formation by reducing CAV1 expression and CAV1 amount by increasing lysosomal degradation. Facilitates surface trafficking and the formation of lipid rafts bearing GPI-anchor proteins. Regulates surface expression of MHC1 and ICAM1 proteins increasing susceptibility to T-cell mediated cytotoxicity. Regulates the plasma membrane expression of the integrin heterodimers ITGA6-ITGB1, ITGA5-ITGB3 and ITGA5-ITGB1 resulting in modulation of cell-matrix adhesion. Also regulates many processes through PTK2. Regulates blood vessel endothelial cell migration and angiogenesis by regulating VEGF protein expression through PTK2 activation. Regulates cell migration and cell contraction through PTK2 and SRC activation. Regulates focal adhesion density, F-actin conformation and cell adhesion capacity through interaction with PTK2. Positively regulates cell proliferation. Plays a role during cell death and cell blebbing. Promotes angiogenesis and vasculogenesis through induction of VEGFA via a HIF1A-dependent pathway. Also plays a role in embryo implantation by regulating surface trafficking of integrin heterodimer ITGA5-ITGB3. Plays a role in placental angiogenesis and uterine natural killer cell regulation at the maternal-fetal placental interface, however not required in the maternal tissues for a viable pregnancy. Involved in the early stages of embryogenic development and cardiogenesis, potentially via regulation of epithelial-mesenchymal transition timing. May play a role in glomerular filtration. This chain is Epithelial membrane protein 2 (EMP2), found in Bos taurus (Bovine).